A 620-amino-acid polypeptide reads, in one-letter code: Cilia- and flagella-associated protein 52 (620 aa).

11 WD repeats span residues 62–106 (GHGN…LIAR), 109–150 (LHKG…AICG), 156–195 (LNVGNATSVVFSRCRDEMFVTAGNGTIRVWELDLPNRKIW), 288–327 (QLQGGITSITLRGEGHQFFVGTEESHIYRVNFTDFKETLI), 330–369 (CHFEAVQDIVFPFGTAELFATCAKKDIRVWHTMSKRELLR), 372–411 (VPNMTCHGIDFMRDGKSIISAWDDGKIRAFAPESGRLMYT), 415–454 (AHRIGVTAIATTSDCKRIISGGGEGEVRVWQVGCQTQKLE), 459–498 (EHKSSVSCIRVKKNNEECVTASTDGTCIIWDLVRLRRNQM), 500–541 (LANT…RELE), 543–582 (SLSGSINGMDITQEGGHFVTGGHDHLVKVWDYNEGEVTHV), and 585–620 (GHSGNIMAMRISPGNQYIVSVSADGAILRWKYPFAS).

This sequence belongs to the CFAP52 family. As to quaternary structure, microtubule inner protein component of sperm flagellar doublet microtubules. Interacts with BRCA2. Interacts with the CCT chaperonin complex. Interacts with HSP70. Interacts with AK8. Interacts with CFAP45. Interacts with DNAI1. Interacts with IQDC.

It is found in the cytoplasm. It localises to the cytoskeleton. The protein resides in the cilium axoneme. Its subcellular location is the flagellum axoneme. Microtubule inner protein (MIP) part of the dynein-decorated doublet microtubules (DMTs) in cilia axoneme. Important for proper ciliary and flagellar beating. May act in cooperation with CFAP45 and axonemal dynein subunit DNAH11. May play a role in cell growth and/or survival. The polypeptide is Cilia- and flagella-associated protein 52 (Mus musculus (Mouse)).